The chain runs to 77 residues: U8-lycotoxin-Ls1p (77 aa).

The N-terminal stretch at 1–20 (MKLMIFTGLVLFAIVSLIEA) is a signal peptide. A propeptide spanning residues 21 to 26 (QAENEK) is cleaved from the precursor.

Belongs to the neurotoxin 19 (CSTX) family. 08 (U8-Lctx) subfamily. Contains 4 disulfide bonds. Expressed by the venom gland.

It is found in the secreted. In Lycosa singoriensis (Wolf spider), this protein is U8-lycotoxin-Ls1p.